The chain runs to 266 residues: CAAX prenyl protease 2 (266 aa).

A run of 3 helical transmembrane segments spans residues 1–21 (MGAG…VHLF), 42–59 (LLSN…LRDY), and 78–98 (ITYP…MMQI). Residues glutamate 131 and histidine 164 each act as proton donor/acceptor in the active site. 3 helical membrane-spanning segments follow: residues 186 to 206 (GFQF…QLTT), 210 to 230 (IVPI…WLEI), and 239 to 259 (RLTL…LLYT).

Belongs to the peptidase U48 family.

The protein resides in the endoplasmic reticulum membrane. The protein localises to the membrane. The enzyme catalyses Hydrolyzes the peptide bond -P2-(S-farnesyl or geranylgeranyl)C-P1'-P2'-P3'-COOH where P1' and P2' are amino acids with aliphatic sidechains and P3' is any C-terminal residue.. Functionally, protease involved in the processing of a variety of prenylated proteins containing the C-terminal CAAX motif, where C is a cysteine modified with an isoprenoid lipid, A is an aliphatic amino acid and X is any C-terminal amino acid. Proteolytically removes the C-terminal three residues of farnesylated and geranylated proteins, leaving the prenylated cysteine as the new C-terminus. The chain is CAAX prenyl protease 2 from Caenorhabditis elegans.